We begin with the raw amino-acid sequence, 284 residues long: Tropomyosin alpha-3 chain (284 aa).

At Met-1 the chain carries N-acetylmethionine. The interval 1–40 (MEAIKKKMQMLKLDKENALDRAEQAEAEQKQAEERSKQLE) is disordered. Positions 1–284 (MEAIKKKMQM…DHALNDMTSI (284 aa)) form a coiled coil. The span at 12–40 (KLDKENALDRAEQAEAEQKQAEERSKQLE) shows a compositional bias: basic and acidic residues. A Phosphothreonine modification is found at Thr-53. Ser-61 and Ser-87 each carry phosphoserine. Phosphothreonine occurs at positions 108 and 252. At Tyr-261 the chain carries Phosphotyrosine. Ser-271 is subject to Phosphoserine. Position 282 is a phosphothreonine (Thr-282). At Ser-283 the chain carries Phosphoserine.

This sequence belongs to the tropomyosin family. In terms of assembly, homodimer. Heterodimer of an alpha (TPM1, TPM3 or TPM4) and a beta (TPM2) chain. Interacts with TMOD1. Interacts with TNNT1.

The protein localises to the cytoplasm. Its subcellular location is the cytoskeleton. Its function is as follows. Binds to actin filaments in muscle and non-muscle cells. Plays a central role, in association with the troponin complex, in the calcium dependent regulation of vertebrate striated muscle contraction. Smooth muscle contraction is regulated by interaction with caldesmon. In non-muscle cells is implicated in stabilizing cytoskeleton actin filaments. The protein is Tropomyosin alpha-3 chain (TPM3) of Sus scrofa (Pig).